A 134-amino-acid polypeptide reads, in one-letter code: ATP synthase epsilon chain, plastid (134 aa).

This sequence belongs to the ATPase epsilon chain family. In terms of assembly, F-type ATPases have 2 components, CF(1) - the catalytic core - and CF(0) - the membrane proton channel. CF(1) has five subunits: alpha(3), beta(3), gamma(1), delta(1), epsilon(1). CF(0) has three main subunits: a, b and c.

Its subcellular location is the plastid membrane. Produces ATP from ADP in the presence of a proton gradient across the membrane. The polypeptide is ATP synthase epsilon chain, plastid (Prototheca wickerhamii).